We begin with the raw amino-acid sequence, 432 residues long: MVIKGMRVGKYELGRTLGEGNSAKVKFAIDTLTGESFAIKIIEKSCITRLNVSFQIKREIRTLKVLKHPNIVRLHEVLASKTKIYMVLECVTGGDLFDRIVSKGKLSETQGRKMFQQLIDGVSYCHNKGVFHRDLKLENVLLDAKGHIKITDFGLSALSQHYREDGLLHTTCGSPNYVAPEVLANEGYDGAASDIWSCGVILYVILTGCLPFDDANLAVICRKIFKGDPPIPRWISLGAKTMIKRMLDPNPVTRVTIAGIKAHDWFKHDYTPSNYDDDDDVYLIQEDVFMMKEYEEEKSPDSPTIINAFQLIGMSSFLDLSGFFETEKLSERQIRFTSNSLAKDLLENIETIFTEMGFCLQKKHAKLKAIKEESTQKRQCGLSVTAEVFEISPSLNVVELRKSHGDSSLYKQLYERLLNELGSSSQVQELLA.

Positions 11 to 266 constitute a Protein kinase domain; sequence YELGRTLGEG…IAGIKAHDWF (256 aa). ATP is bound by residues 17–25 and Lys40; that span reads LGEGNSAKV. Residue Asp134 is the Proton acceptor of the active site. The tract at residues 152 to 181 is activation loop; sequence DFGLSALSQHYREDGLLHTTCGSPNYVAPE. A Phosphoserine modification is found at Ser156. Residue Thr170 is modified to Phosphothreonine. One can recognise an NAF domain in the interval 301 to 325; sequence DSPTIINAFQLIGMSSFLDLSGFFE. Residues 331–360 are PPI; the sequence is ERQIRFTSNSLAKDLLENIETIFTEMGFCL.

This sequence belongs to the protein kinase superfamily. CAMK Ser/Thr protein kinase family. SNF1 subfamily. In terms of assembly, interacts with CBL1. Requires Mn(2+) as cofactor.

The enzyme catalyses L-seryl-[protein] + ATP = O-phospho-L-seryl-[protein] + ADP + H(+). The catalysed reaction is L-threonyl-[protein] + ATP = O-phospho-L-threonyl-[protein] + ADP + H(+). CIPK serine-threonine protein kinases interact with CBL proteins. Binding of a CBL protein to the regulatory NAF domain of CIPK protein lead to the activation of the kinase in a calcium-dependent manner. The sequence is that of CBL-interacting serine/threonine-protein kinase 17 (CIPK17) from Arabidopsis thaliana (Mouse-ear cress).